Consider the following 637-residue polypeptide: Early transcription factor 70 kDa subunit (637 aa).

The Helicase ATP-binding domain occupies 32-185 (RTIIDENRSV…GHIIDLMSEE (154 aa)). ATP is bound at residue 45 to 52 (HIMGSGKT). Residues 135-138 (DKAH) carry the DEXH box motif. In terms of domain architecture, Helicase C-terminal spans 327-507 (KFKYFINRIQ…VLPFDIKKLL (181 aa)).

The protein belongs to the helicase family. VETF subfamily. As to quaternary structure, heterodimer of a 70 kDa and a 82 kDa subunit. Part of the early transcription complex composed of ETF, RAP94/OPG109, and the DNA-directed RNA polymerase.

It localises to the virion. Acts with RNA polymerase to initiate transcription from early gene promoters. Is recruited by the RPO-associated protein of 94 kDa RAP94/OPG109 to form the early transcription complex, which also contains the core RNA polymerase. ETF heterodimer binds to early gene promoters. The sequence is that of Early transcription factor 70 kDa subunit (OPG118) from Homo sapiens (Human).